The primary structure comprises 1426 residues: Phospholipid-transporting ATPase VD (1426 aa).

The Cytoplasmic segment spans residues 1-97 (MTEALQWARY…PRNLFEQFHR (97 aa)). The chain crosses the membrane as a helical span at residues 98-118 (AANLYFLFLVVLNWVPLVEAF). Residues 119 to 121 (QKE) lie on the Exoplasmic loop side of the membrane. Residues 122-142 (ITMLPLVVVLTIIAIKDGLED) traverse the membrane as a helical segment. The Cytoplasmic portion of the chain corresponds to 143–321 (YRKYKIDKQI…SKLERRANTD (179 aa)). A helical transmembrane segment spans residues 322–342 (VLWCVMLLVIMCLTGAVGHGI). The Exoplasmic loop segment spans residues 343-365 (WLSRYEKMHFFNVPEPDGHIISP). The chain crosses the membrane as a helical span at residues 366–386 (LLAGFYMFWTMIILLQVLIPI). Over 387–1113 (SLYVSIEIVK…HWCYTRLSNM (727 aa)) the chain is Cytoplasmic. The 4-aspartylphosphate intermediate role is filled by Asp-438. ATP contacts are provided by Asp-438, Lys-439, and Thr-440. Asp-438 is a binding site for Mg(2+). Thr-440 lines the Mg(2+) pocket. Positions 506–531 (NGPLGNKPSNHLAGSSFTLGSGEGAS) are disordered. Over residues 512-524 (KPSNHLAGSSFTL) the composition is skewed to polar residues. ATP-binding positions include Glu-730, Phe-772, Lys-796, Arg-840, Thr-920, Gly-921, Asp-922, 996–1003 (GLIITGKT), Arg-1030, and Lys-1036. Asp-1056 lines the Mg(2+) pocket. The ATP site is built by Asn-1059 and Asp-1060. Asp-1060 contacts Mg(2+). A helical membrane pass occupies residues 1114 to 1134 (ILYFFYKNVAYVNLLFWYQFF). At 1135–1145 (CGFSGTSMTDY) the chain is on the exoplasmic loop side. The helical transmembrane segment at 1146-1166 (WVLIFFNLLFTSAPPVIYGVL) threads the bilayer. The Cytoplasmic segment spans residues 1167–1195 (EKDVSAETLMQLPELYRSGQKSEAYLPHT). A helical membrane pass occupies residues 1196 to 1216 (FWITLLDAFYQSLVCFFVPYF). The Exoplasmic loop segment spans residues 1217–1224 (TYQGSDTD). The chain crosses the membrane as a helical span at residues 1225–1245 (IFAFGNPLNTAALFIVLLHLV). Topologically, residues 1246–1252 (IESKSLT) are cytoplasmic. A helical transmembrane segment spans residues 1253 to 1273 (WIHLLVIIGSILSYFLFAIVF). At 1274–1292 (GAMCVTCNPPSNPYWIMQE) the chain is on the exoplasmic loop side. Residues 1293 to 1313 (HMLDPVFYLVCILTTSIALLP) traverse the membrane as a helical segment. Topologically, residues 1314–1426 (RFVYRVLQGS…MAGPSKGKES (113 aa)) are cytoplasmic. An ATP-binding site is contributed by 1364–1371 (ANQSAGKS).

Belongs to the cation transport ATPase (P-type) (TC 3.A.3) family. Type IV subfamily. As to quaternary structure, component of a P4-ATPase flippase complex which consists of a catalytic alpha subunit ATP10A and an accessory beta subunit TMEM30A. Requires Mg(2+) as cofactor. In terms of processing, autophosphorylated at the conserved aspartate of the P-type ATPase signature sequence. As to expression, expressed in placenta and, to a lesser extent, in kidney.

It is found in the cell membrane. Its subcellular location is the endoplasmic reticulum membrane. It catalyses the reaction ATP + H2O + phospholipidSide 1 = ADP + phosphate + phospholipidSide 2.. The enzyme catalyses a beta-D-glucosyl-(1&lt;-&gt;1')-N-acylsphing-4-enine(out) + ATP + H2O = a beta-D-glucosyl-(1&lt;-&gt;1')-N-acylsphing-4-enine(in) + ADP + phosphate + H(+). In terms of biological role, catalytic component of a P4-ATPase flippase complex, which catalyzes the hydrolysis of ATP coupled to the transport of glucosylceramide (GlcCer) from the outer to the inner leaflet of the plasma membrane. The polypeptide is Phospholipid-transporting ATPase VD (Homo sapiens (Human)).